Here is a 94-residue protein sequence, read N- to C-terminus: Acylphosphatase (94 aa).

Residues 8–94 (ALHVIVKGRV…RGYTDFRIEV (87 aa)) enclose the Acylphosphatase-like domain. Catalysis depends on residues arginine 23 and asparagine 41.

This sequence belongs to the acylphosphatase family.

The catalysed reaction is an acyl phosphate + H2O = a carboxylate + phosphate + H(+). The protein is Acylphosphatase (acyP) of Treponema denticola (strain ATCC 35405 / DSM 14222 / CIP 103919 / JCM 8153 / KCTC 15104).